We begin with the raw amino-acid sequence, 501 residues long: Cytochrome P450 monooxygenase 76AD131 (501 aa).

A helical membrane pass occupies residues 1–21 (MGYYAIFAVVLPFLWTCFYLL). N-linked (GlcNAc...) asparagine glycosylation is found at N115 and N264. A heme-binding site is contributed by C444.

It belongs to the cytochrome P450 family. It depends on heme as a cofactor. As to expression, highly expressed in aerial parts, in both skin and flesh tissues.

Its subcellular location is the membrane. The enzyme catalyses tyramine + reduced [NADPH--hemoprotein reductase] + O2 = dopamine + oxidized [NADPH--hemoprotein reductase] + H2O + H(+). The catalysed reaction is 3-methoxytyramine + reduced [NADPH--hemoprotein reductase] + O2 = 3,4-dihydroxy-5-methoxyphenethylamine + oxidized [NADPH--hemoprotein reductase] + H2O + H(+). The protein operates within aromatic compound metabolism. It functions in the pathway alkaloid biosynthesis. Cytochrome P450 monooxygenase participating in the biosynthesis of natural products derived from phenylethylamine, including mescaline, a natural hallucinogen potentially used in psychotherapeutic treatments. Catalyzes the hydroxylation of tyramine to dopamine and of 3-methoxytyramine to 3,4-dihydroxy-5-methoxyphenethylamine. This is Cytochrome P450 monooxygenase 76AD131 from Lophophora williamsii (Peyote).